The primary structure comprises 376 residues: T-box transcription factor 18 (376 aa).

Low complexity predominate over residues 38–63 (STSRPSSSSPPSLPAVSSELLSSSFP). Residues 38–76 (STSRPSSSSPPSLPAVSSELLSSSFPTNAPESSSRDLAP) are disordered. The segment at residues 171–364 (LANQEQWAKF…GNKYCRTDRK (194 aa)) is a DNA-binding region (T-box).

The protein localises to the nucleus. Transcriptional regulator involved in developmental processes. Directly binds to the promoter region of the sex-determining factor xol-1 to activate its transcription. Its activation of xol-1 transcription controls sex determination and X chromosome dosage compensation to promote male development. Has a role in the fox-1-sex-1-mediated determination of sexual fate. The polypeptide is T-box transcription factor 18 (Caenorhabditis elegans).